Consider the following 478-residue polypeptide: Adenosylhomocysteinase (478 aa).

The substrate site is built by Thr57, Asp139, and Glu201. 202-204 (TTT) contributes to the NAD(+) binding site. Residues Lys231 and Asp235 each coordinate substrate. NAD(+)-binding positions include Asn236, 265 to 270 (GYGDVG), Glu288, Asn323, 344 to 346 (IGH), and Asn392.

This sequence belongs to the adenosylhomocysteinase family. NAD(+) serves as cofactor.

It localises to the cytoplasm. It carries out the reaction S-adenosyl-L-homocysteine + H2O = L-homocysteine + adenosine. The protein operates within amino-acid biosynthesis; L-homocysteine biosynthesis; L-homocysteine from S-adenosyl-L-homocysteine: step 1/1. Its function is as follows. May play a key role in the regulation of the intracellular concentration of adenosylhomocysteine. This is Adenosylhomocysteinase from Corynebacterium efficiens (strain DSM 44549 / YS-314 / AJ 12310 / JCM 11189 / NBRC 100395).